We begin with the raw amino-acid sequence, 340 residues long: MKPGGPIGVVGAGSWGTTLAQVIADKGFEVDLWVFEPELCKTIRETRQNDLYLPGVVLSGRINAHNDLDRVVKNHDLLIMVVPSHVYRNVATAMIPFLKPDAVVVNATKGIENDTLLTMSGIWREVLPPGLQVRVLCLSGPSFAREVARKVPTAVTLAGDELQTAKAVQHVISTGYFRIYTSLDKIGVEIAGASKNVIALAAGVSDGMSFGYNSRAALITRGLAEITRLGVKMGSNPLTFLGLAGIGDLLLTCTGDLSRNRTVGIQLGQGRRIKDILAEMRMVAEGVKTAKSIHFLARRIGVEMPICEQVYRVIYEDKDPRVVVRELMERDLKHELELGH.

Residues S14, W15, and K109 each contribute to the NADPH site. Sn-glycerol 3-phosphate-binding residues include K109, G140, and S142. A144 contacts NADPH. K195, D248, S258, R259, and N260 together coordinate sn-glycerol 3-phosphate. The active-site Proton acceptor is the K195. Position 259 (R259) interacts with NADPH. NADPH is bound by residues V283 and E285.

The protein belongs to the NAD-dependent glycerol-3-phosphate dehydrogenase family.

Its subcellular location is the cytoplasm. It catalyses the reaction sn-glycerol 3-phosphate + NAD(+) = dihydroxyacetone phosphate + NADH + H(+). The catalysed reaction is sn-glycerol 3-phosphate + NADP(+) = dihydroxyacetone phosphate + NADPH + H(+). It participates in membrane lipid metabolism; glycerophospholipid metabolism. In terms of biological role, catalyzes the reduction of the glycolytic intermediate dihydroxyacetone phosphate (DHAP) to sn-glycerol 3-phosphate (G3P), the key precursor for phospholipid synthesis. The protein is Glycerol-3-phosphate dehydrogenase [NAD(P)+] of Syntrophobacter fumaroxidans (strain DSM 10017 / MPOB).